The chain runs to 199 residues: Prolactin-1 (199 aa).

Cystine bridges form between cysteine 4–cysteine 11, cysteine 58–cysteine 174, and cysteine 191–cysteine 199. Residue asparagine 60 is glycosylated (N-linked (GlcNAc...) asparagine).

Belongs to the somatotropin/prolactin family. In terms of processing, glycosylated.

The protein resides in the secreted. The chain is Prolactin-1 from Alligator mississippiensis (American alligator).